Consider the following 162-residue polypeptide: Cyanate hydratase (162 aa).

Catalysis depends on residues arginine 102, glutamate 105, and serine 128.

This sequence belongs to the cyanase family.

The catalysed reaction is cyanate + hydrogencarbonate + 3 H(+) = NH4(+) + 2 CO2. Its function is as follows. Catalyzes the reaction of cyanate with bicarbonate to produce ammonia and carbon dioxide. The sequence is that of Cyanate hydratase from Mycosarcoma maydis (Corn smut fungus).